A 78-amino-acid polypeptide reads, in one-letter code: UPF0335 protein RBE_1185 (78 aa).

This sequence belongs to the UPF0335 family.

This is UPF0335 protein RBE_1185 from Rickettsia bellii (strain RML369-C).